Here is a 141-residue protein sequence, read N- to C-terminus: Hemoglobin subunit alpha-A (141 aa).

Residues 1–141 enclose the Globin domain; it reads VLSASDKTNV…VAKELTAKYR (141 aa). O2 is bound at residue His58. His87 contacts heme b.

The protein belongs to the globin family. In terms of assembly, heterotetramer of two alpha chains and two beta chains. Red blood cells.

In terms of biological role, involved in oxygen transport from the lung to the various peripheral tissues. This Phalacrocorax carbo (Great cormorant) protein is Hemoglobin subunit alpha-A (HBAA).